We begin with the raw amino-acid sequence, 403 residues long: uncharacterized protein (403 aa).

6 helical membrane passes run 31–51 (FLIA…IGSF), 186–206 (LPIG…GIIV), 238–258 (ISAV…PIII), 268–288 (LAIF…SLLC), 303–323 (LISP…TIMV), and 355–375 (LIEI…SFIL).

The protein to B.subtilis YhaP.

Its subcellular location is the cell membrane. This is an uncharacterized protein from Methanocaldococcus jannaschii (strain ATCC 43067 / DSM 2661 / JAL-1 / JCM 10045 / NBRC 100440) (Methanococcus jannaschii).